Reading from the N-terminus, the 51-residue chain is MFKKVGKFLAALAAILTLAYILAVYPQVALVVVGACYLAAVCACVWSIVNW.

An N-terminal signal peptide occupies residues 1 to 23 (MFKKVGKFLAALAAILTLAYILA). The chain crosses the membrane as a helical span at residues 28-48 (VALVVVGACYLAAVCACVWSI).

Its subcellular location is the host membrane. The chain is Protein 1.4 from Escherichia coli (Bacteriophage T7).